Consider the following 90-residue polypeptide: DNA-binding protein HU-alpha (90 aa).

The protein belongs to the bacterial histone-like protein family. Heterodimer of an alpha and a beta chain.

Functionally, histone-like DNA-binding protein which is capable of wrapping DNA to stabilize it, and thus to prevent its denaturation under extreme environmental conditions. This is DNA-binding protein HU-alpha (hupA) from Aeromonas hydrophila.